We begin with the raw amino-acid sequence, 574 residues long: Frizzled-7 (574 aa).

The first 32 residues, 1-32, serve as a signal peptide directing secretion; it reads MRDPGAAAPLSSLGLCALVLALLGALSAGAGA. The Extracellular segment spans residues 33 to 256; sequence QPYHGEKGIS…EEERRFARLW (224 aa). The FZ domain maps to 44–163; sequence PDHGFCQPIS…HGAGEICVGQ (120 aa). 5 disulfide bridges follow: cysteine 49–cysteine 110, cysteine 57–cysteine 103, cysteine 94–cysteine 131, cysteine 120–cysteine 160, and cysteine 124–cysteine 148. A glycan (N-linked (GlcNAc...) asparagine) is linked at asparagine 63. Asparagine 164 carries N-linked (GlcNAc...) asparagine glycosylation. Residues 257-277 traverse the membrane as a helical segment; the sequence is VGVWSVLCCASTLFTVLTYLV. Residues 278-288 are Cytoplasmic-facing; that stretch reads DMRRFSYPERP. The chain crosses the membrane as a helical span at residues 289–309; sequence IIFLSGCYFMVAVAHVAGFLL. At 310–336 the chain is on the extracellular side; it reads EDRAVCVERFSDDGYRTVAQGTKKEGC. The chain crosses the membrane as a helical span at residues 337-357; sequence TILFMVLYFFGMASSIWWVIL. The Cytoplasmic segment spans residues 358-379; the sequence is SLTWFLAAGMKWGHEAIEANSQ. Residues 380–400 form a helical membrane-spanning segment; the sequence is YFHLAAWAVPAVKTITILAMG. The Extracellular portion of the chain corresponds to 401–423; sequence QVDGDLLSGVCYVGLSSVDALRG. The chain crosses the membrane as a helical span at residues 424-444; that stretch reads FVLAPLFVYLFIGTSFLLAGF. The Cytoplasmic portion of the chain corresponds to 445–470; that stretch reads VSLFRIRTIMKHDGTKTEKLEKLMVR. The helical transmembrane segment at 471-491 threads the bilayer; it reads IGVFSVLYTVPATIVLACYFY. The Extracellular segment spans residues 492–528; it reads EQAFREHWERTWLLQTCKSYAVPCPPGHFPPMSPDFT. The chain crosses the membrane as a helical span at residues 529–549; it reads VFMIKYLMTMIVGITTGFWIW. The Cytoplasmic segment spans residues 550–574; that stretch reads SGKTLQSWRRFYHRLSHSSKGETAV. The Lys-Thr-X-X-X-Trp motif, mediates interaction with the PDZ domain of Dvl family members motif lies at 552–557; the sequence is KTLQSW. The PDZ-binding motif lies at 572–574; the sequence is TAV.

This sequence belongs to the G-protein coupled receptor Fz/Smo family. As to quaternary structure, interacts with MAGI3. Interacts with DVL1. Interacts with CCDC88C/DAPLE; the interaction displaces DVL1 from FZD7, leading to inhibition of canonical Wnt signaling and triggering of non-canonical Wnt responses. Interacts with MYOC. Binds to SDCBP; this interaction is increased by inositol trisphosphate (IP3). Interacts with glypican GPC3. In terms of assembly, (Microbial infection) Interacts with C.difficile toxin TcdB; frizzled receptors constitute the major host receptors for TcdB in the colonic epithelium. In terms of processing, ubiquitinated by ZNRF3, leading to its degradation by the proteasome. In terms of tissue distribution, high expression in adult skeletal muscle and fetal kidney, followed by fetal lung, adult heart, brain, and placenta. Specifically expressed in squamous cell esophageal carcinomas.

It is found in the cell membrane. It localises to the endosome membrane. Functionally, receptor for Wnt proteins. Most frizzled receptors are coupled to the beta-catenin canonical signaling pathway, which leads to the activation of disheveled proteins, inhibition of GSK-3 kinase, nuclear accumulation of beta-catenin and activation of Wnt target genes. A second signaling pathway involving PKC and calcium fluxes has been seen for some family members, but it is not yet clear if it represents a distinct pathway or if it can be integrated in the canonical pathway, as PKC seems to be required for Wnt-mediated inactivation of GSK-3 kinase. Both pathways seem to involve interactions with G-proteins. Activation by WNT8 induces expression of beta-catenin target genes. Following ligand activation, binds to CCDC88C/DAPLE which displaces DVL1 from FZD7 and leads to inhibition of canonical Wnt signaling, activation of G-proteins by CCDC88C and triggering of non-canonical Wnt responses. May be involved in transduction and intercellular transmission of polarity information during tissue morphogenesis and/or in differentiated tissues. In terms of biological role, (Microbial infection) Acts as a receptor for C.difficile toxin TcdB in the colonic epithelium. This is Frizzled-7 (FZD7) from Homo sapiens (Human).